The chain runs to 275 residues: Polyamine aminopropyltransferase (275 aa).

The PABS domain maps to 2 to 235; it reads DLWLREGQIE…GFWSFTIGSK (234 aa). An S-methyl-5'-thioadenosine-binding site is contributed by Q31. 2 residues coordinate spermidine: H62 and D86. S-methyl-5'-thioadenosine is bound by residues E106 and 137–138; that span reads DG. The active-site Proton acceptor is the D155. Spermidine is bound at residue 155-158; it reads DSTD.

The protein belongs to the spermidine/spermine synthase family. Homodimer or homotetramer.

Its subcellular location is the cytoplasm. It catalyses the reaction S-adenosyl 3-(methylsulfanyl)propylamine + putrescine = S-methyl-5'-thioadenosine + spermidine + H(+). It participates in amine and polyamine biosynthesis; spermidine biosynthesis; spermidine from putrescine: step 1/1. Catalyzes the irreversible transfer of a propylamine group from the amino donor S-adenosylmethioninamine (decarboxy-AdoMet) to putrescine (1,4-diaminobutane) to yield spermidine. This chain is Polyamine aminopropyltransferase, found in Clostridium kluyveri (strain NBRC 12016).